We begin with the raw amino-acid sequence, 227 residues long: Cytochrome c oxidase subunit 2 (227 aa).

Over 1–14 the chain is Mitochondrial intermembrane; the sequence is MAYPLQLGFQDATS. A helical membrane pass occupies residues 15-45; it reads PVMEELLHFHDHTLMIIFLISSLVLYIIMLM. At 46–59 the chain is on the mitochondrial matrix side; the sequence is LTTKLVHTNMMNVQ. The helical transmembrane segment at 60-87 threads the bilayer; sequence EMEMIWTILPAIILILIALPSLHTLYMM. Topologically, residues 88–227 are mitochondrial intermembrane; that stretch reads DEINNPLLTI…YFESWSASLA (140 aa). Residues His-161, Cys-196, Glu-198, Cys-200, His-204, and Met-207 each coordinate Cu cation. Glu-198 is a Mg(2+) binding site. At Tyr-218 the chain carries Phosphotyrosine.

It belongs to the cytochrome c oxidase subunit 2 family. In terms of assembly, component of the cytochrome c oxidase (complex IV, CIV), a multisubunit enzyme composed of 14 subunits. The complex is composed of a catalytic core of 3 subunits MT-CO1, MT-CO2 and MT-CO3, encoded in the mitochondrial DNA, and 11 supernumerary subunits COX4I, COX5A, COX5B, COX6A, COX6B, COX6C, COX7A, COX7B, COX7C, COX8 and NDUFA4, which are encoded in the nuclear genome. The complex exists as a monomer or a dimer and forms supercomplexes (SCs) in the inner mitochondrial membrane with NADH-ubiquinone oxidoreductase (complex I, CI) and ubiquinol-cytochrome c oxidoreductase (cytochrome b-c1 complex, complex III, CIII), resulting in different assemblies (supercomplex SCI(1)III(2)IV(1) and megacomplex MCI(2)III(2)IV(2)). Found in a complex with TMEM177, COA6, COX18, COX20, SCO1 and SCO2. Interacts with TMEM177 in a COX20-dependent manner. Interacts with COX20. Interacts with COX16. Cu cation serves as cofactor.

It localises to the mitochondrion inner membrane. It carries out the reaction 4 Fe(II)-[cytochrome c] + O2 + 8 H(+)(in) = 4 Fe(III)-[cytochrome c] + 2 H2O + 4 H(+)(out). Functionally, component of the cytochrome c oxidase, the last enzyme in the mitochondrial electron transport chain which drives oxidative phosphorylation. The respiratory chain contains 3 multisubunit complexes succinate dehydrogenase (complex II, CII), ubiquinol-cytochrome c oxidoreductase (cytochrome b-c1 complex, complex III, CIII) and cytochrome c oxidase (complex IV, CIV), that cooperate to transfer electrons derived from NADH and succinate to molecular oxygen, creating an electrochemical gradient over the inner membrane that drives transmembrane transport and the ATP synthase. Cytochrome c oxidase is the component of the respiratory chain that catalyzes the reduction of oxygen to water. Electrons originating from reduced cytochrome c in the intermembrane space (IMS) are transferred via the dinuclear copper A center (CU(A)) of subunit 2 and heme A of subunit 1 to the active site in subunit 1, a binuclear center (BNC) formed by heme A3 and copper B (CU(B)). The BNC reduces molecular oxygen to 2 water molecules using 4 electrons from cytochrome c in the IMS and 4 protons from the mitochondrial matrix. In Mammuthus primigenius (Siberian woolly mammoth), this protein is Cytochrome c oxidase subunit 2 (MT-CO2).